A 1098-amino-acid polypeptide reads, in one-letter code: MLEGDLASKMLRAVLQSHKNGVALPRLQGEYRSLTGDWIPFKQLGFPTLEAYLRSVPAVVRIETSRSGEITCYAMACTETARIAQLVARQRSSKRKTGRQVNCQMRVKKTMPFFLEGKPKATLRQPGFASNFSVGKKPNLAPLRDKGNSAVVKPDAEISPCMLHTTLGNEAFKDIPVQRHVTMSTNNRFSPKASLQPPLQMHLSRTSTKEMSDNLNQTVEKPNVTPPASYTYKMDEVQNRIKEILNKHNNGIWISKLPHFYKELYKEDLNQGILQQFEHWPHICTVEKPCSGGQDLLLYPAKRKQLLRSELDTEKVPLSPLPGPKQTPPLKGCPTVMAGDFKEKVADLLVKYTSGLWASALPKAFEEMYKVKFPEDALKNLASLSDVCSIDYISGNPQKAILYAKLPLPTDKIQKDAEQAHGDHDIKAMVEQEYLQLEENIAESANTFMEYITVPPLMIPTEASPSVLVVELSNTNEVVIRYVGKDYSAAQELMEDEMKEYYSKNPKVTPVQAVNVGQLLAVNAEEDAWLRAQVISTEENKIKVCYVDYGFSENVEKSKAYKLNPKFCSLSFQATKCKLAGLEVLSDDPDLVKVVESLTCGKIFAVEILDKADIPLVVLYDTSGEDDININATCLKAICDKSLEVHLQVDAMYTNVKVTNICSDGTLYCQVPCKGLNKLSDLLRKIEDYFHCKHMTSECFVSLPFCGKICLFHCKGKWLRVEITNVHSSRALDVQFLDSGTVTSVKVSELREIPPRFLQEMIAIPPQAIKCCLADLPQSIGMWTPDAVLWLRDSVLNCSDCSIKVTKVDETRGIAHVYLFTPKNFPDPHRSINRQITNADLWKHQKDVFLSAISSGAGSPNSKNGNMRVSGDTGENFRKNLTDVIKKSMMDHTSSFSTEELPPPVHLSKPGEHMDVYVPVACHPGYFVIQPWQEIHKLEVLMEEMILYYSVSEERHIAVEKDQVYAAKVENKWHRVLLKGILTNGLVSVYELDYGKHELVNIRKVQPLADMFRKLPFQAVTAQLAGVKCTQWSEEASMVFRNRVEKKPLVALVQTVIENANPWDRKVVVYLVDTSLPDTDIWIHDFMSEYLIELSKVN.

HTH OST-type domains follow at residues 3–76 (EGDL…YAMA) and 233–302 (KMDE…YPAK). Residue Ser-319 is modified to Phosphoserine. The region spanning 337–406 (MAGDFKEKVA…PQKAILYAKL (70 aa)) is the HTH OST-type 3 domain. 2 consecutive Tudor domains span residues 513-570 (AVNV…FCSL) and 703-760 (LPFC…FLQE). A Phosphoserine modification is found at Ser-859. The interaction with CDK17 stretch occupies residues 861–1098 (NSKNGNMRVS…EYLIELSKVN (238 aa)). Residues 893-1098 (TSSFSTEELP…EYLIELSKVN (206 aa)) are interaction with CABLES1.

The protein belongs to the TDRD7 family. In terms of assembly, found in a mRNP complex, at least composed of TDRD1, TDRD6, TDRD7 and DDX4. Found in a complex containing CABLES1, CDK16 and CDK17. Interacts with CABLES1, CDK17 and PIWIL1.

The protein localises to the cytoplasm. Component of specific cytoplasmic RNA granules involved in post-transcriptional regulation of specific genes: probably acts by binding to specific mRNAs and regulating their translation. Required for lens transparency during lens development, by regulating translation of genes such as CRYBB3 and HSPB1 in the developing lens. Also required during spermatogenesis. This is Tudor domain-containing protein 7 (TDRD7) from Pongo abelii (Sumatran orangutan).